The following is a 62-amino-acid chain: MTIAFQLAVFALISTSLILLIGVPVVFASPEGWSSNKNIVFSGTSLWIGLVFLVGILNSLIS.

Helical transmembrane passes span 8 to 28 (AVFA…VVFA) and 41 to 61 (FSGT…NSLI).

This sequence belongs to the PsbZ family. PSII is composed of 1 copy each of membrane proteins PsbA, PsbB, PsbC, PsbD, PsbE, PsbF, PsbH, PsbI, PsbJ, PsbK, PsbL, PsbM, PsbT, PsbY, PsbZ, Psb30/Ycf12, at least 3 peripheral proteins of the oxygen-evolving complex and a large number of cofactors. It forms dimeric complexes.

It localises to the plastid. It is found in the chloroplast thylakoid membrane. In terms of biological role, may control the interaction of photosystem II (PSII) cores with the light-harvesting antenna, regulates electron flow through the 2 photosystem reaction centers. PSII is a light-driven water plastoquinone oxidoreductase, using light energy to abstract electrons from H(2)O, generating a proton gradient subsequently used for ATP formation. In Pelargonium hortorum (Common geranium), this protein is Photosystem II reaction center protein Z.